Here is a 42-residue protein sequence, read N- to C-terminus: Photosystem I reaction center subunit IX (42 aa).

The helical transmembrane segment at 7–27 (YLSVAPVLSTLWFGALAGLLI) threads the bilayer.

It belongs to the PsaJ family.

Its subcellular location is the plastid. It is found in the chloroplast thylakoid membrane. Functionally, may help in the organization of the PsaE and PsaF subunits. The polypeptide is Photosystem I reaction center subunit IX (Agrostis stolonifera (Creeping bentgrass)).